Reading from the N-terminus, the 297-residue chain is uncharacterized protein (297 aa).

Glutamate 46 is a catalytic residue.

This sequence belongs to the PhzF family. In terms of assembly, homodimer and homotetramer.

This is an uncharacterized protein from Escherichia coli O157:H7.